The sequence spans 92 residues: Progonadoliberin-1 (92 aa).

A signal peptide spans 1 to 23 (MGLIPKLLAGLVLLTLCVENGSG). Q24 carries the post-translational modification Pyrrolidone carboxylic acid. G33 is subject to Glycine amide.

This sequence belongs to the GnRH family. In terms of processing, the precursor is cleaved by ACE, which removes the Gly-Lys-Arg peptide at the C-terminus, leading to mature hormone. The mature form of Gonadoliberin-1 is also cleaved and degraded by ACE.

It localises to the secreted. Functionally, stimulates the secretion of gonadotropins; it stimulates the secretion of both luteinizing and follicle-stimulating hormones. The protein is Progonadoliberin-1 (GNRH1) of Cavia porcellus (Guinea pig).